The primary structure comprises 78 residues: Large ribosomal subunit protein bL31 (78 aa).

The protein belongs to the bacterial ribosomal protein bL31 family. Type A subfamily. In terms of assembly, part of the 50S ribosomal subunit.

Binds the 23S rRNA. The chain is Large ribosomal subunit protein bL31 (rpmE) from Rickettsia typhi (strain ATCC VR-144 / Wilmington).